Consider the following 339-residue polypeptide: Protein RETICULATA-RELATED 2, chloroplastic (339 aa).

The N-terminal 58 residues, 1–58 (MAAMAAKLHISTKSDQSNVRLPRLINLSRDPTARVLFPRNGSVSSLHTNFSSPNIMVP), are a transit peptide targeting the chloroplast. A compositionally biased stretch (gly residues) spans 68–86 (IGNHGGGSGSGGGGGGYGG). The tract at residues 68 to 92 (IGNHGGGSGSGGGGGGYGGSEEEES) is disordered. 2 helical membrane-spanning segments follow: residues 148–168 (FVFS…YLLA) and 213–233 (VFAT…NGLI).

Belongs to the RETICULATA family.

It is found in the plastid. It localises to the chloroplast membrane. Its function is as follows. May play a role in leaf development. In Arabidopsis thaliana (Mouse-ear cress), this protein is Protein RETICULATA-RELATED 2, chloroplastic.